The chain runs to 493 residues: UPF0699 transmembrane protein YdbT (493 aa).

6 consecutive transmembrane segments (helical) span residues 18–38 (CHTI…VYIV), 46–66 (FYGA…SIIK), 188–208 (LMAA…FALI), 232–252 (IGIY…FSIA), 370–390 (VIFS…WGYL), and 393–413 (ILLP…AWTI).

It belongs to the UPF0699 family.

It localises to the cell membrane. This is UPF0699 transmembrane protein YdbT (ydbT) from Bacillus subtilis (strain 168).